We begin with the raw amino-acid sequence, 56 residues long: Large ribosomal subunit protein bL32 (56 aa).

The interval 1–26 is disordered; the sequence is MAVQKSKVTRSRRGQRRSHDALTAAA. The span at 7-16 shows a compositional bias: basic residues; that stretch reads KVTRSRRGQR.

The protein belongs to the bacterial ribosomal protein bL32 family.

This is Large ribosomal subunit protein bL32 (rpmF) from Moritella marina (Vibrio marinus).